The following is a 433-amino-acid chain: 3-phosphoshikimate 1-carboxyvinyltransferase (433 aa).

Lysine 22, serine 23, and arginine 27 together coordinate 3-phosphoshikimate. Position 22 (lysine 22) interacts with phosphoenolpyruvate. The phosphoenolpyruvate site is built by glycine 96 and arginine 129. The 3-phosphoshikimate site is built by serine 175, serine 176, glutamine 177, serine 203, aspartate 318, asparagine 341, and lysine 345. Glutamine 177 provides a ligand contact to phosphoenolpyruvate. Aspartate 318 acts as the Proton acceptor in catalysis. Arginine 349, arginine 393, and lysine 418 together coordinate phosphoenolpyruvate.

The protein belongs to the EPSP synthase family. In terms of assembly, monomer.

It localises to the cytoplasm. The catalysed reaction is 3-phosphoshikimate + phosphoenolpyruvate = 5-O-(1-carboxyvinyl)-3-phosphoshikimate + phosphate. Its pathway is metabolic intermediate biosynthesis; chorismate biosynthesis; chorismate from D-erythrose 4-phosphate and phosphoenolpyruvate: step 6/7. In terms of biological role, catalyzes the transfer of the enolpyruvyl moiety of phosphoenolpyruvate (PEP) to the 5-hydroxyl of shikimate-3-phosphate (S3P) to produce enolpyruvyl shikimate-3-phosphate and inorganic phosphate. In Mannheimia succiniciproducens (strain KCTC 0769BP / MBEL55E), this protein is 3-phosphoshikimate 1-carboxyvinyltransferase.